A 730-amino-acid polypeptide reads, in one-letter code: Catalase-peroxidase 1 (730 aa).

The tryptophyl-tyrosyl-methioninium (Trp-Tyr) (with M-243) cross-link spans 92-217; that stretch reads WHSAGTYRTT…LGAAVMGLIY (126 aa). The active-site Proton acceptor is the His93. A cross-link (tryptophyl-tyrosyl-methioninium (Tyr-Met) (with W-92)) is located at residues 217-243; that stretch reads YVDPEGPNGNPDPLASAENIRESFGRM. Heme b is bound at residue His258.

It belongs to the peroxidase family. Peroxidase/catalase subfamily. In terms of assembly, homodimer or homotetramer. The cofactor is heme b. In terms of processing, formation of the three residue Trp-Tyr-Met cross-link is important for the catalase, but not the peroxidase activity of the enzyme.

The enzyme catalyses H2O2 + AH2 = A + 2 H2O. It carries out the reaction 2 H2O2 = O2 + 2 H2O. Functionally, bifunctional enzyme with both catalase and broad-spectrum peroxidase activity. This chain is Catalase-peroxidase 1, found in Haloarcula marismortui (strain ATCC 43049 / DSM 3752 / JCM 8966 / VKM B-1809) (Halobacterium marismortui).